Here is a 501-residue protein sequence, read N- to C-terminus: Cytochrome P450 monooxygeanse terP (501 aa).

The helical transmembrane segment at 2 to 22 (PSLLLSLLLLQVPIICAWLLV) threads the bilayer. Residue C441 participates in heme binding.

The protein belongs to the cytochrome P450 family. It depends on heme as a cofactor.

It is found in the membrane. Its pathway is secondary metabolite biosynthesis. Functionally, cytochrome P450 monooxygeanse; part of the gene cluster that mediates the biosynthesis of terpendoles, indole-diterpene (IDT) mycotoxins including terpendole I, terpendole K, terpendole C, as well as the kinesin Eg5 inhibitor terpendole E. TerP has dual activity and is able to convert terpendole E to 13-desoxyterpendole I and paspaline to 13-desoxypaxilline. Terpendoles biosynthesis begins with the synthesis of geranylgeranyl diphosphate (GGPP) by a yet unidentified GGPP synthase. Condensation of indole-3-glycerol phosphate with GGPP by the prenyltransferase terC then forms 3-geranylgeranylindole (3-GGI), followed by epoxidation and cyclization of this intermediate (by the FAD-dependent monooxygeanse terM and the terpene cyclase terB) to form paspaline. The cytochrome monooxygenase terQ then hydroxylates paspalline at C-11 to yield terpendole E. The cytochrome monooxygenase terP converts terpendole E to 13-desoxyterpendole I, and terQ converts 13-desoxyterpendole I into terpendole I. TerF and terK are required for conversion of terpendole I to terpendole C which is further converted to terpendole K. In Tolypocladium album (Soil fungus), this protein is Cytochrome P450 monooxygeanse terP.